The chain runs to 298 residues: GTPase Era (298 aa).

The 168-residue stretch at 3–170 (KSGFVTIVGR…VELMKKAMPE (168 aa)) folds into the Era-type G domain. Residues 11 to 18 (GRPNVGKS) form a G1 region. Position 11–18 (11–18 (GRPNVGKS)) interacts with GTP. Positions 37 to 41 (QTTRN) are G2. The segment at 58 to 61 (DTPG) is G3. GTP contacts are provided by residues 58-62 (DTPGI) and 120-123 (NKVD). The segment at 120-123 (NKVD) is G4. Residues 149 to 151 (ISA) form a G5 region. In terms of domain architecture, KH type-2 spans 201-278 (LRDEVPHGIA…NLKIWVKVRK (78 aa)).

Belongs to the TRAFAC class TrmE-Era-EngA-EngB-Septin-like GTPase superfamily. Era GTPase family. As to quaternary structure, monomer.

Its subcellular location is the cytoplasm. The protein localises to the cell membrane. An essential GTPase that binds both GDP and GTP, with rapid nucleotide exchange. Plays a role in 16S rRNA processing and 30S ribosomal subunit biogenesis and possibly also in cell cycle regulation and energy metabolism. The polypeptide is GTPase Era (Clostridium beijerinckii (strain ATCC 51743 / NCIMB 8052) (Clostridium acetobutylicum)).